The chain runs to 544 residues: Chaperonin GroEL (544 aa).

ATP is bound by residues 30–33, Lys-51, 87–91, Gly-415, and Asp-495; these read TLGP and DGTTT.

The protein belongs to the chaperonin (HSP60) family. In terms of assembly, forms a cylinder of 14 subunits composed of two heptameric rings stacked back-to-back. Interacts with the co-chaperonin GroES.

Its subcellular location is the cytoplasm. The catalysed reaction is ATP + H2O + a folded polypeptide = ADP + phosphate + an unfolded polypeptide.. Functionally, together with its co-chaperonin GroES, plays an essential role in assisting protein folding. The GroEL-GroES system forms a nano-cage that allows encapsulation of the non-native substrate proteins and provides a physical environment optimized to promote and accelerate protein folding. The chain is Chaperonin GroEL from Neisseria meningitidis serogroup A / serotype 4A (strain DSM 15465 / Z2491).